A 158-amino-acid chain; its full sequence is Small ribosomal subunit protein uS13 (158 aa).

This sequence belongs to the universal ribosomal protein uS13 family. In terms of assembly, part of the 30S ribosomal subunit. Forms a loose heterodimer with protein S19. Forms two bridges to the 50S subunit in the 70S ribosome.

Its function is as follows. Located at the top of the head of the 30S subunit, it contacts several helices of the 16S rRNA. In the 70S ribosome it contacts the 23S rRNA (bridge B1a) and protein L5 of the 50S subunit (bridge B1b), connecting the 2 subunits; these bridges are implicated in subunit movement. The sequence is that of Small ribosomal subunit protein uS13 from Picrophilus torridus (strain ATCC 700027 / DSM 9790 / JCM 10055 / NBRC 100828 / KAW 2/3).